A 740-amino-acid chain; its full sequence is Homeobox protein 4 (740 aa).

Polar residues predominate over residues 1 to 13 (MNTVEENNTKITD). Disordered stretches follow at residues 1 to 41 (MNTV…ENLS) and 179 to 491 (NNNN…NNEI). 4 stretches are compositionally biased toward low complexity: residues 14-34 (NNNNNNNNNNNNNNNNNNNKN), 179-241 (NNNN…PQQN), 251-288 (NNNNINNNNINKNNNNYNNNNNNKNNNNNNNNNNNNNN), and 303-316 (STTDNTSSVSSVPS). Residues 254–287 (NINNNNINKNNNNYNNNNNNKNNNNNNNNNNNNN) adopt a coiled-coil conformation. A compositionally biased stretch (basic residues) spans 317–328 (NKKKSSKTKQKS). Over residues 339 to 363 (HKSNYHQQPNQNSQHLQSKPNSPIL) the composition is skewed to polar residues. Low complexity-rich tracts occupy residues 365-390 (SSPLNSQQNSSPPQPSPTQSFLSPPQ) and 397-491 (NNNF…NNEI). Residues 472–500 (NTNTNNNNNKNNNNNNNNEIENNNNEELI) adopt a coiled-coil conformation. Positions 605-667 (RPKKGAKLSK…NTRRRKVPTL (63 aa)) form a DNA-binding region, homeobox. Residues 686–722 (NNNNNNGGNSNFKNNNNNTITTTSTSNNNNNNNNNNH) are compositionally biased toward low complexity. The disordered stretch occupies residues 686–740 (NNNNNNGGNSNFKNNNNNTITTTSTSNNNNNNNNNNHNEMECDDGENEESSEYDD). Positions 726–740 (ECDDGENEESSEYDD) are enriched in acidic residues.

The protein resides in the nucleus. Putative transcription factor. In Dictyostelium discoideum (Social amoeba), this protein is Homeobox protein 4 (hbx4).